The sequence spans 280 residues: Orotidine 5'-phosphate decarboxylase (280 aa).

Lys97 (proton donor) is an active-site residue.

Belongs to the OMP decarboxylase family. Type 2 subfamily.

The catalysed reaction is orotidine 5'-phosphate + H(+) = UMP + CO2. The protein operates within pyrimidine metabolism; UMP biosynthesis via de novo pathway; UMP from orotate: step 2/2. The chain is Orotidine 5'-phosphate decarboxylase (pyrF) from Corynebacterium efficiens (strain DSM 44549 / YS-314 / AJ 12310 / JCM 11189 / NBRC 100395).